Reading from the N-terminus, the 547-residue chain is MFS-type transporter M6 (547 aa).

The tract at residues 1 to 45 (MHRRRRDNLMTPAEMVASMKPPQSLSTEDDDGSRRDSESSADVLK) is disordered. Residues 81–101 (VLVVASFAAAISPFSTSTYYP) traverse the membrane as a helical segment. N-linked (GlcNAc...) asparagine glycosylation is present at N118. A helical membrane pass occupies residues 146–166 (PMFLVCFAIYFVANVGLALQN). N167 is a glycosylation site (N-linked (GlcNAc...) asparagine). 2 helical membrane-spanning segments follow: residues 206-226 (LIYA…IGGL) and 236-256 (VFWF…IFFG). N274 carries N-linked (GlcNAc...) asparagine glycosylation. 5 helical membrane passes run 317 to 337 (FILS…TSVL), 347 to 367 (YDAV…LLAY), 407 to 427 (LGFV…YGWQ), 432 to 452 (APLA…TGVM), and 469 to 489 (AVGA…VAVV). Residue N493 is glycosylated (N-linked (GlcNAc...) asparagine). A helical membrane pass occupies residues 496–516 (AGIGWTATVTAGLWVLMMPTL).

Belongs to the major facilitator superfamily. CAR1 family.

Its subcellular location is the membrane. In terms of biological role, MFS-type transporter; part of the gene cluster that mediates the biosynthesis of squalestatin S1 (SQS1, also known as zaragozic acid A), a heavily oxidized fungal polyketide that offers potent cholesterol lowering activity by targeting squalene synthase (SS). The chain is MFS-type transporter M6 from Phoma sp. (strain ATCC 20986 / MF5453).